A 480-amino-acid chain; its full sequence is Alpha-glucosidase (480 aa).

4–70 (VKIGIIGAGS…ADLKFEKTTS (67 aa)) serves as a coordination point for NAD(+). The substrate site is built by aspartate 119 and asparagine 153. Cysteine 174 is a Mn(2+) binding site. The active-site Proton donor is the histidine 175. Position 203 (histidine 203) interacts with Mn(2+). The active-site Proton acceptor is aspartate 260.

It belongs to the glycosyl hydrolase 4 family. Homodimer. Requires NAD(+) as cofactor. The cofactor is Mn(2+).

It carries out the reaction Hydrolysis of terminal, non-reducing (1-&gt;4)-linked alpha-D-glucose residues with release of alpha-D-glucose.. Its activity is regulated as follows. Inhibited by EDTA in vitro. Its function is as follows. Is able to hydrolyze diverse types of alpha-glycoside bonds in di- and trisaccharides: alpha-1,4 bonds of maltose and maltotriose, alpha-1,1 bonds of trehalose, alpha-1,2 bonds of sucrose, alpha-1,3 bonds of turanose and melizitose, alpha-1,6 bonds of isomaltose and melibiose. AglA is not specific with respect to the configuration at the C-4 position of its substrates because it also possesses alpha-galactosidase activity. Acts on the substrate from the non-reducing end of the chain. The activity of AglA drops with increasing length of the saccharide chain. Does not hydrolyze alpha-, beta-, and gamma-cyclodextrins or polysaccharides (starch, pullulan, amylose, amylopectin, glycogen). Does not cleave beta-glycosidic bonds in di-, oligo-, or polysaccharides. This chain is Alpha-glucosidase (aglA), found in Thermotoga neapolitana.